We begin with the raw amino-acid sequence, 271 residues long: MAIITKVSAQKRQGRYNIFLDQEYAFSVSEKTLAEFVLLKGQELSPQKINEILDYEASAKASDLAARYLSYQPRTIKEVTDYLSQHEISRSAAKRAVNELTHLGYLDDAAYARLFVKNNLQVGKNGPGAVRRDLKKKGVDDDLIEAALADVTDEEWAGVGKRLVKSLLGQQGKIAKREVDRKMQTKLLSHGFSGSLAQAVTQDLVPEADEDQERAALVKQVLKAYKRFKRYEPGVREQKMRQYLYSHGFSGDEISAFLVGEIIPLEELEEY.

The protein belongs to the RecX family.

Its subcellular location is the cytoplasm. Modulates RecA activity. This chain is Regulatory protein RecX, found in Lactobacillus delbrueckii subsp. bulgaricus (strain ATCC 11842 / DSM 20081 / BCRC 10696 / JCM 1002 / NBRC 13953 / NCIMB 11778 / NCTC 12712 / WDCM 00102 / Lb 14).